The chain runs to 382 residues: Na(+)/H(+) antiporter NhaA (382 aa).

The next 11 membrane-spanning stretches (helical) occupy residues Ala14–Phe34, Met49–Leu69, Ile87–Phe107, Gly117–Gly137, Val146–Phe166, Leu171–Ser191, Phe205–Leu225, Ala247–Ile267, Val285–Val305, Ile321–Leu341, and Leu356–Ser376.

The protein belongs to the NhaA Na(+)/H(+) (TC 2.A.33) antiporter family.

The protein resides in the cell inner membrane. It carries out the reaction Na(+)(in) + 2 H(+)(out) = Na(+)(out) + 2 H(+)(in). Its function is as follows. Na(+)/H(+) antiporter that extrudes sodium in exchange for external protons. The protein is Na(+)/H(+) antiporter NhaA of Aliivibrio salmonicida (strain LFI1238) (Vibrio salmonicida (strain LFI1238)).